Here is a 461-residue protein sequence, read N- to C-terminus: Cysteine--tRNA ligase (461 aa).

Position 29 (C29) interacts with Zn(2+). The short motif at 31 to 41 (PTVYNYAHIGN) is the 'HIGH' region element. Zn(2+)-binding residues include C214, H239, and E243. Positions 271 to 275 (KMSKS) match the 'KMSKS' region motif. Residue K274 coordinates ATP.

Belongs to the class-I aminoacyl-tRNA synthetase family. In terms of assembly, monomer. It depends on Zn(2+) as a cofactor.

Its subcellular location is the cytoplasm. The catalysed reaction is tRNA(Cys) + L-cysteine + ATP = L-cysteinyl-tRNA(Cys) + AMP + diphosphate. The chain is Cysteine--tRNA ligase from Hyphomonas neptunium (strain ATCC 15444).